Here is a 60-residue protein sequence, read N- to C-terminus: Mastoparan-VT3 (60 aa).

The signal sequence occupies residues 1–27 (MKNTILILFTAFIALLGFFGMSAEALA). 4 AXPX repeats span residues 27–30 (ADPK), 31–34 (ADPL), 35–38 (AGPN), and 41–44 (ADPE). A propeptide spanning residues 28–45 (DPKADPLAGPNPDADPEA) is cleaved from the precursor. The residue at position 59 (Leu59) is a Leucine amide.

This sequence belongs to the MCD family. Mastoparan subfamily. As to expression, expressed by the venom gland.

It is found in the secreted. Functionally, the synthetic peptide shows antimicrobial activities against Gram-negative bacteria (but not against all strains tested), Gram-positive bacteria (all strains tested) and the fungi C.albicans and C.parapsilosis. Exhibits moderate hemolytic activity (25% at 100 ug/ml) against washed human erythrocytes. This is Mastoparan-VT3 from Vespa tropica (Greater banded hornet).